The primary structure comprises 233 residues: Enolase-phosphatase E1 (233 aa).

This sequence belongs to the HAD-like hydrolase superfamily. MasA/MtnC family. Monomer. It depends on Mg(2+) as a cofactor.

The enzyme catalyses 5-methylsulfanyl-2,3-dioxopentyl phosphate + H2O = 1,2-dihydroxy-5-(methylsulfanyl)pent-1-en-3-one + phosphate. Its pathway is amino-acid biosynthesis; L-methionine biosynthesis via salvage pathway; L-methionine from S-methyl-5-thio-alpha-D-ribose 1-phosphate: step 3/6. The protein operates within amino-acid biosynthesis; L-methionine biosynthesis via salvage pathway; L-methionine from S-methyl-5-thio-alpha-D-ribose 1-phosphate: step 4/6. Functionally, bifunctional enzyme that catalyzes the enolization of 2,3-diketo-5-methylthiopentyl-1-phosphate (DK-MTP-1-P) into the intermediate 2-hydroxy-3-keto-5-methylthiopentenyl-1-phosphate (HK-MTPenyl-1-P), which is then dephosphorylated to form the acireductone 1,2-dihydroxy-3-keto-5-methylthiopentene (DHK-MTPene). The protein is Enolase-phosphatase E1 of Hahella chejuensis (strain KCTC 2396).